The chain runs to 407 residues: Arylacetamide deacetylase-like 4 family member 1 (407 aa).

Over 1–4 the chain is Cytoplasmic; it reads MLYL. The helical; Signal-anchor for type II membrane protein transmembrane segment at 5–25 threads the bilayer; the sequence is VGFLLATVCLLVLGVNVWVLI. At 26–407 the chain is on the lumenal side; it reads DHFLTIDVPP…NAVVSYIKDL (382 aa). The short motif at 119 to 121 is the Involved in the stabilization of the negatively charged intermediate by the formation of the oxyanion hole element; the sequence is HGG. An N-linked (GlcNAc...) asparagine glycan is attached at Asn168. Catalysis depends on residues Ser193, Asp347, and His377.

The protein belongs to the 'GDXG' lipolytic enzyme family.

The protein resides in the membrane. The protein is Arylacetamide deacetylase-like 4 family member 1 of Mus musculus (Mouse).